The primary structure comprises 952 residues: Germ layers disorganized gldi-3 (952 aa).

An FHA domain is found at 39-100 (KSFGRATTND…NGTYINDRRL (62 aa)). Disordered regions lie at residues 174–220 (IGPR…MPST), 483–639 (GTPK…ESTV), and 652–866 (AAQS…KERC). 2 stretches are compositionally biased toward polar residues: residues 179–195 (PSTT…STNG) and 202–220 (NRAS…MPST). The segment covering 523-537 (EESEILDVVGTDEPD) has biased composition (acidic residues). Residues 553 to 568 (PEDHGRQTQNKIDKNV) are compositionally biased toward basic and acidic residues. 2 stretches are compositionally biased toward polar residues: residues 569-584 (RMSS…TPSA) and 600-620 (VTSS…NPVS). A compositionally biased stretch (low complexity) spans 662–679 (SVSNTTSSTSASLTTSSV). A compositionally biased stretch (basic and acidic residues) spans 685–706 (TSSKENTDQKRAVDDSSDESAR). A compositionally biased stretch (low complexity) spans 715 to 724 (SATPSSTPAE). Over residues 725 to 742 (SSKRKQKDTSSRKMKQLD) the composition is skewed to basic and acidic residues. Residues 761-772 (TKRRDKARRSTR) show a composition bias toward basic residues. The span at 789–800 (VEDEDETDDVQE) shows a compositional bias: acidic residues. Composition is skewed to basic and acidic residues over residues 823 to 832 (IKERKTKDKD) and 856 to 866 (PPKTEPSKERC).

The protein localises to the nucleus. In terms of biological role, potential transcription factor that may play a role in the regulation of genes involved in cell cycle G1/S transition. May bind to regulatory elements of genes. The polypeptide is Germ layers disorganized gldi-3 (Caenorhabditis elegans).